A 558-amino-acid polypeptide reads, in one-letter code: Phosphatidylserine lipase ABHD16A (558 aa).

2 helical membrane passes run 60 to 80 (ILAL…FAFF) and 93 to 113 (VVPF…VACL). At 114-558 (RGIGRWTNPQ…AQHFQMPWCL (445 aa)) the chain is on the cytoplasmic side. The 127-residue stretch at 281-407 (LVICCEGNAG…LVTRTVRQHL (127 aa)) folds into the AB hydrolase-1 domain. Catalysis depends on charge relay system residues Ser-355, Asp-430, and His-507.

It belongs to the AB hydrolase superfamily. ABHD16 family.

It localises to the membrane. It carries out the reaction 1-heptadecanoyl-2-(5Z,8Z,11Z,14Z-eicosatetraenoyl)-sn-glycero-3-phosphoserine + H2O = 1-heptadecanoyl-sn-glycero-3-phosphoserine + (5Z,8Z,11Z,14Z)-eicosatetraenoate + H(+). The catalysed reaction is 1-hexadecanoyl-2-(9Z-octadecenoyl)-sn-glycero-3-phospho-L-serine + H2O = 1-hexadecanoyl-sn-glycero-3-phospho-L-serine + (9Z)-octadecenoate + H(+). It catalyses the reaction 1-octadecanoyl-2-(9Z,12Z-octadecadienoyl)-sn-glycero-3-phosphoserine + H2O = 1-octadecanoyl-sn-glycero-3-phosphoserine + (9Z,12Z)-octadecadienoate + H(+). The enzyme catalyses 1-heptadecanoyl-2-(5Z,8Z,11Z,14Z-eicosatetraenoyl)-sn-glycero-3-phosphocholine + H2O = 1-heptadecanoyl-sn-glycero-3-phosphocholine + (5Z,8Z,11Z,14Z)-eicosatetraenoate + H(+). It carries out the reaction 1-hexadecanoyl-2-(9Z-octadecenoyl)-sn-glycero-3-phosphoglycerol + H2O = 1-hexadecanoyl-sn-glycero-3-phosphoglycerol + (9Z)-octadecenoate + H(+). The catalysed reaction is 1-hexadecanoyl-2-(9Z-octadecenoyl)-sn-glycero-3-phospho-(1D-myo-inositol) + H2O = 1-hexadecanoyl-sn-glycero-3-phospho-(1D-myo-inositol) + (9Z)-octadecenoate + H(+). It catalyses the reaction 1-heptadecanoyl-2-(5Z,8Z,11Z,14Z-eicosatetraenoyl)-sn-glycero-3-phosphoethanolamine + H2O = 1-heptadecanoyl-sn-glycero-3-phosphoethanolamine + (5Z,8Z,11Z,14Z)-eicosatetraenoate + H(+). The enzyme catalyses 1-hexadecanoyl-2-(9Z-octadecenoyl)-sn-glycero-3-phospho-(1'-sn-glycerol) + H2O = 1-hexadecanoyl-sn-glycero-3-phospho-(1'-sn-glycerol) + (9Z)-octadecenoate + H(+). It carries out the reaction Hydrolyzes glycerol monoesters of long-chain fatty acids.. The catalysed reaction is 1-tetradecanoylglycerol + H2O = tetradecanoate + glycerol + H(+). It catalyses the reaction 2-hexadecanoylglycerol + H2O = glycerol + hexadecanoate + H(+). The enzyme catalyses 1-(9Z-octadecenoyl)-glycerol + H2O = glycerol + (9Z)-octadecenoate + H(+). It carries out the reaction 2-(9Z-octadecenoyl)-glycerol + H2O = glycerol + (9Z)-octadecenoate + H(+). The catalysed reaction is 2-(9Z,12Z-octadecadienoyl)-glycerol + H2O = (9Z,12Z)-octadecadienoate + glycerol + H(+). It catalyses the reaction 1-(5Z,8Z,11Z,14Z-eicosatetraenoyl)-glycerol + H2O = glycerol + (5Z,8Z,11Z,14Z)-eicosatetraenoate + H(+). The enzyme catalyses 2-(5Z,8Z,11Z,14Z-eicosatetraenoyl)-glycerol + H2O = glycerol + (5Z,8Z,11Z,14Z)-eicosatetraenoate + H(+). It carries out the reaction prostaglandin D2-1-glycerol ester + H2O = prostaglandin D2 + glycerol + H(+). The catalysed reaction is 2-glyceryl-15-deoxy-Delta(12,14)-prostaglandin J2 + H2O = 15-deoxy-Delta(12,14)-prostaglandin J2 + glycerol + H(+). It catalyses the reaction 1-(9Z,12Z-octadecadienoyl)-glycerol + H2O = (9Z,12Z)-octadecadienoate + glycerol + H(+). Its function is as follows. Phosphatidylserine (PS) lipase that mediates the hydrolysis of phosphatidylserine to generate lysophosphatidylserine (LPS). LPS constitutes a class of signaling lipids that regulates immunological and neurological processes. Has no activity towards diacylglycerol, triacylglycerol or lysophosphatidylserine lipase. Also has monoacylglycerol lipase activity, with preference for 1-(9Z,12Z-octadecadienoyl)-glycerol (1-LG) and 2-glyceryl-15-deoxy-Delta(12,14)-prostaglandin J2 (15d-PGJ(2)-G). The protein is Phosphatidylserine lipase ABHD16A of Rattus norvegicus (Rat).